A 660-amino-acid polypeptide reads, in one-letter code: MSNGNDNQVIELIQNFFLKSAGLVTTVESNRYSLDDTSIEFDDEWFDMNIDVLHDLPPIIDKWTNFDGTQELPPLVIETFLDLHLLPSSYTVRLRDDESHLWAVSKGNKKSEIVLERWLIELDKESTSFKNHVQSGSGVSPEKLDQQLRLLFRYLFTLLQLLPSNDLMMALNNQSESHNTPIPVDIKTRILDGSQPILSKGRIGLSRPIISSYSNIINNSNIPAHLEQKKITPVWTKYGLLRISVSYRRDCQFIFQDLNEDNSPNTQITNQPAKTNEISISLSPRSKNDLNQISHPSWQKKFISSSKQFQPFIVGSVGSANTPNQNSSRNPSNSSVVGPHYHPQHRLSIGSSTSVSTQPNYEGTSVGSTSKFASSFNNLRRHSSVRYHESTEKLAKTDKNNYEDTDDLMEFVRLIEAKPELQPKKGLSGLQDKNLSGSILRYQKLRPSNDMLSEDLALSVSIDPIHGSQRRNSNSHSHSPVASFSPSGHFSSINSKLSQPHLAVRGSSSTVNSRRNSVDKVLASALSPIYGGDIPEYHTKSHNPVFNEVDDEEEGNDDLLVNKIPININKHKMSTSPRSIDSISNSLTRNRTPFRQPYQYSQPTTIATQAYAKMHRPTVRSSDAISEINSRKGDNFHQLINDNDEDDLVFFMSDMNLPRE.

Disordered regions lie at residues Gly315–Thr369, Gly467–Asn516, and Lys572–Pro597. Residues Asn321–Ser335 show a composition bias toward low complexity. Positions Ile349–Thr369 are enriched in polar residues. Residues Arg470–Ser479 show a composition bias toward low complexity. Polar residues predominate over residues Pro480 to Ser498. Residues Val504–Arg515 show a composition bias toward low complexity. Residues Ser574–Pro597 are compositionally biased toward polar residues.

It belongs to the ATG13 family. Fungi subfamily. Interacts with ATG1 to form the ATG1-ATG13 kinase complex.

The protein localises to the cytoplasm. It is found in the preautophagosomal structure. Functionally, activates the ATG1 kinase in a nutritional condition dependent manner through the TOR pathway, leading to autophagy. Also involved in cytoplasm to vacuole transport (Cvt) and more specifically in Cvt vesicle formation. Seems to play a role in the switching machinery regulating the conversion between the Cvt pathway and autophagy. Finally, ATG13 is also required for glycogen storage during stationary phase. The chain is Autophagy-related protein 13 (ATG13) from Candida glabrata (strain ATCC 2001 / BCRC 20586 / JCM 3761 / NBRC 0622 / NRRL Y-65 / CBS 138) (Yeast).